The sequence spans 384 residues: 8-amino-7-oxononanoate synthase (384 aa).

Position 21 (Arg21) interacts with substrate. 108-109 serves as a coordination point for pyridoxal 5'-phosphate; sequence GF. His133 provides a ligand contact to substrate. Residues Ser179, His207, and Thr233 each coordinate pyridoxal 5'-phosphate. Position 236 is an N6-(pyridoxal phosphate)lysine (Lys236). Thr352 is a substrate binding site.

This sequence belongs to the class-II pyridoxal-phosphate-dependent aminotransferase family. BioF subfamily. Homodimer. It depends on pyridoxal 5'-phosphate as a cofactor.

It carries out the reaction 6-carboxyhexanoyl-[ACP] + L-alanine + H(+) = (8S)-8-amino-7-oxononanoate + holo-[ACP] + CO2. It functions in the pathway cofactor biosynthesis; biotin biosynthesis. Functionally, catalyzes the decarboxylative condensation of pimeloyl-[acyl-carrier protein] and L-alanine to produce 8-amino-7-oxononanoate (AON), [acyl-carrier protein], and carbon dioxide. This chain is 8-amino-7-oxononanoate synthase, found in Shigella boydii serotype 18 (strain CDC 3083-94 / BS512).